The sequence spans 207 residues: Chloramphenicol acetyltransferase (207 aa).

Histidine 186 acts as the Proton acceptor in catalysis.

This sequence belongs to the chloramphenicol acetyltransferase family. In terms of assembly, homotrimer.

It carries out the reaction chloramphenicol + acetyl-CoA = chloramphenicol 3-acetate + CoA. Its function is as follows. This enzyme is an effector of chloramphenicol resistance in bacteria. The polypeptide is Chloramphenicol acetyltransferase (Campylobacter coli).